The sequence spans 687 residues: Triadin (687 aa).

The Cytoplasmic segment spans residues Met1 to Pro47. The chain crosses the membrane as a helical span at residues Ala48–Phe68. The Lumenal portion of the chain corresponds to Asp69 to Gln687. The span at Asp117–Asp130 shows a compositional bias: acidic residues. 3 disordered regions span residues Asp117–Asp265, Gly280–Pro643, and Phe660–Gln687. Residues Lys131 to Asp265 show a composition bias toward basic and acidic residues. Residues Leu295–Ser306 show a composition bias toward polar residues. A phosphoserine mark is found at Ser303 and Ser306. The span at Leu307–Glu356 shows a compositional bias: basic and acidic residues. The segment covering Thr357–Ala370 has biased composition (low complexity). Basic and acidic residues-rich tracts occupy residues Thr371–Pro390, Glu396–Ile431, Gly442–Pro459, and Leu466–Lys501. Asn514 carries N-linked (GlcNAc...) asparagine glycosylation. 2 stretches are compositionally biased toward basic and acidic residues: residues Thr539–Pro583 and Thr594–Val630. 2 stretches are compositionally biased toward polar residues: residues Thr631–Pro643 and Val667–Gln687.

As to quaternary structure, homooligomer of variable subunit number; disulfide-linked. Interacts with CASQ1 in skeletal muscle. Interacts with CASQ2. Interacts with RYR1 in skeletal muscle. In terms of processing, phosphorylated by CaMK2. N-glycosylated. As to expression, detected in skeletal muscle (at protein level). Detected in skeletal muscle.

The protein localises to the sarcoplasmic reticulum membrane. It is found in the microsome. It localises to the cell membrane. Its subcellular location is the sarcolemma. Contributes to the regulation of lumenal Ca2+ release via the sarcoplasmic reticulum calcium release channels RYR1 and RYR2, a key step in triggering skeletal and heart muscle contraction. Required for normal organization of the triad junction, where T-tubules and the sarcoplasmic reticulum terminal cisternae are in close contact. Required for normal skeletal muscle strength. Plays a role in excitation-contraction coupling in the heart and in regulating the rate of heart beats. This chain is Triadin, found in Rattus norvegicus (Rat).